The following is a 785-amino-acid chain: Endonuclease MutS2 (785 aa).

331 to 338 serves as a coordination point for ATP; that stretch reads GPNTGGKT. Residues 710 to 785 form the Smr domain; sequence LDLRGLYADE…GLGVTVVELA (76 aa).

Belongs to the DNA mismatch repair MutS family. MutS2 subfamily. Homodimer. Binds to stalled ribosomes, contacting rRNA.

Its function is as follows. Endonuclease that is involved in the suppression of homologous recombination and thus may have a key role in the control of bacterial genetic diversity. In terms of biological role, acts as a ribosome collision sensor, splitting the ribosome into its 2 subunits. Detects stalled/collided 70S ribosomes which it binds and splits by an ATP-hydrolysis driven conformational change. Acts upstream of the ribosome quality control system (RQC), a ribosome-associated complex that mediates the extraction of incompletely synthesized nascent chains from stalled ribosomes and their subsequent degradation. Probably generates substrates for RQC. The chain is Endonuclease MutS2 from Pelotomaculum thermopropionicum (strain DSM 13744 / JCM 10971 / SI).